We begin with the raw amino-acid sequence, 353 residues long: Ferredoxin--NADP reductase (353 aa).

Aspartate 33, glutamine 41, tyrosine 46, valine 86, phenylalanine 121, aspartate 293, and threonine 333 together coordinate FAD.

Belongs to the ferredoxin--NADP reductase type 2 family. In terms of assembly, homodimer. FAD serves as cofactor.

It catalyses the reaction 2 reduced [2Fe-2S]-[ferredoxin] + NADP(+) + H(+) = 2 oxidized [2Fe-2S]-[ferredoxin] + NADPH. The sequence is that of Ferredoxin--NADP reductase from Verminephrobacter eiseniae (strain EF01-2).